We begin with the raw amino-acid sequence, 321 residues long: Probable DNA polymerase III subunit delta (321 aa).

This sequence belongs to the DNA polymerase HolA subunit family. As to quaternary structure, component of the DNA clamp loading complex consisting of tau(3):delta(1):delta'(1). The DNA polymerase III holoenzyme complex contains at least 10 different subunits organized into 3 functionally essential subassemblies: the Pol III core, the beta sliding clamp processivity factor and the clamp-loading complex. The Pol III core (subunits alpha, epsilon and theta) contains the polymerase and the 3'-5' exonuclease proofreading activities. The polymerase is tethered to the template via the dimeric beta sliding clamp processivity factor. The DNA clamp-loading complex assembles the beta sliding clamp onto the primed template and plays a central role in the organization and communication at the replication fork.

The catalysed reaction is DNA(n) + a 2'-deoxyribonucleoside 5'-triphosphate = DNA(n+1) + diphosphate. Its function is as follows. Part of the beta sliding clamp loading complex, which hydrolyzes ATP to load the beta clamp onto primed DNA to form the DNA replication pre-initiation complex. DNA polymerase III is a complex, multichain enzyme responsible for most of the replicative synthesis in bacteria. This DNA polymerase also exhibits 3'-5' exonuclease activity. The delta subunit is the wrench that will open the beta subunit dimer. The DNA clamp loading complex (tau(3),delta,delta') is thought to load beta dimers onto DNA by binding ATP which alters the complex's conformation so it can bind beta sliding clamp dimers and open them at one interface. Primed DNA is recognized, ATP is hydrolyzed releasing the clamp loading complex and closing the beta sliding clamp ring around the primed DNA. In Rickettsia prowazekii (strain Madrid E), this protein is Probable DNA polymerase III subunit delta.